The sequence spans 293 residues: Heterogeneous nuclear ribonucleoprotein D-like-A (293 aa).

A disordered region spans residues 1–21; the sequence is MAGFGAAPDFNEGSKINASKN. 2 RRM domains span residues 26-108 and 111-188; these read GKMF…KGKE and KKVF…AAQP. Disordered regions lie at residues 193 to 224 and 274 to 293; these read RQQQQKQQRGGRGAVTGRGGTRGRGRGQGWNQ and QSTYGKARGGGNHQNNYQPY. The span at 202–222 shows a compositional bias: gly residues; the sequence is GGRGAVTGRGGTRGRGRGQGW.

The protein localises to the nucleus. It localises to the cytoplasm. Functionally, acts as a transcriptional regulator. Binds DNA and RNA. This Xenopus laevis (African clawed frog) protein is Heterogeneous nuclear ribonucleoprotein D-like-A (hnrnpdl-a).